The chain runs to 279 residues: Pantothenate synthetase (279 aa).

ATP is bound at residue 30–37 (MGALHAGH). The active-site Proton donor is histidine 37. (R)-pantoate is bound at residue glutamine 61. Glutamine 61 lines the beta-alanine pocket. Residue 147-150 (GEKD) coordinates ATP. Residue glutamine 153 coordinates (R)-pantoate. ATP is bound by residues alanine 176 and 184-187 (LSSR).

It belongs to the pantothenate synthetase family. As to quaternary structure, homodimer.

The protein resides in the cytoplasm. It carries out the reaction (R)-pantoate + beta-alanine + ATP = (R)-pantothenate + AMP + diphosphate + H(+). Its pathway is cofactor biosynthesis; (R)-pantothenate biosynthesis; (R)-pantothenate from (R)-pantoate and beta-alanine: step 1/1. Its function is as follows. Catalyzes the condensation of pantoate with beta-alanine in an ATP-dependent reaction via a pantoyl-adenylate intermediate. This Sphingopyxis alaskensis (strain DSM 13593 / LMG 18877 / RB2256) (Sphingomonas alaskensis) protein is Pantothenate synthetase.